Reading from the N-terminus, the 289-residue chain is 4-diphosphocytidyl-2-C-methyl-D-erythritol kinase (289 aa).

Lys11 is a catalytic residue. 95–105 (PMGGGIGGGSS) lines the ATP pocket. Asp137 is an active-site residue.

This sequence belongs to the GHMP kinase family. IspE subfamily.

The enzyme catalyses 4-CDP-2-C-methyl-D-erythritol + ATP = 4-CDP-2-C-methyl-D-erythritol 2-phosphate + ADP + H(+). The protein operates within isoprenoid biosynthesis; isopentenyl diphosphate biosynthesis via DXP pathway; isopentenyl diphosphate from 1-deoxy-D-xylulose 5-phosphate: step 3/6. Functionally, catalyzes the phosphorylation of the position 2 hydroxy group of 4-diphosphocytidyl-2C-methyl-D-erythritol. The sequence is that of 4-diphosphocytidyl-2-C-methyl-D-erythritol kinase from Aeromonas salmonicida (strain A449).